A 270-amino-acid chain; its full sequence is Homeobox protein Hox-D12 (270 aa).

A disordered region spans residues 102-122; it reads APEAAAGPEERGRTRPSFAPE. Residues 202-261 constitute a DNA-binding region (homeobox); sequence ARKKRKPYTKQQIAELENEFLVNEFINRQKRKELSNRLNLSDQQVKIWFQNRRMKKKRVV.

This sequence belongs to the Abd-B homeobox family.

Its subcellular location is the nucleus. Its function is as follows. Sequence-specific transcription factor which is part of a developmental regulatory system that provides cells with specific positional identities on the anterior-posterior axis. This is Homeobox protein Hox-D12 (HOXD12) from Homo sapiens (Human).